A 234-amino-acid polypeptide reads, in one-letter code: Leucyl/phenylalanyl-tRNA--protein transferase (234 aa).

Belongs to the L/F-transferase family.

The protein resides in the cytoplasm. It carries out the reaction N-terminal L-lysyl-[protein] + L-leucyl-tRNA(Leu) = N-terminal L-leucyl-L-lysyl-[protein] + tRNA(Leu) + H(+). It catalyses the reaction N-terminal L-arginyl-[protein] + L-leucyl-tRNA(Leu) = N-terminal L-leucyl-L-arginyl-[protein] + tRNA(Leu) + H(+). The enzyme catalyses L-phenylalanyl-tRNA(Phe) + an N-terminal L-alpha-aminoacyl-[protein] = an N-terminal L-phenylalanyl-L-alpha-aminoacyl-[protein] + tRNA(Phe). In terms of biological role, functions in the N-end rule pathway of protein degradation where it conjugates Leu, Phe and, less efficiently, Met from aminoacyl-tRNAs to the N-termini of proteins containing an N-terminal arginine or lysine. This Escherichia coli O7:K1 (strain IAI39 / ExPEC) protein is Leucyl/phenylalanyl-tRNA--protein transferase.